Here is a 342-residue protein sequence, read N- to C-terminus: MTTFLAKNWSSLIKPTKVQYEAVDNNPNIKTMVVEPLERGLGLTLGNSLRRVLLSSLRGAAITSIKIPGVEHELSPVSGVKEDLTDIILNIRDVIVKMDSVQKCNLRLEVTGPAVVTAGMITVTDKQDVTILNPQHVICNLSKGFNLEMDLICEQGKGYVPTSCLHNSDSPIGAIHLDALFNPVRRVSYKVENSMVGQMTNYDKLIITVETNGVVNPDAALGLAARILLDQLQVFINFQEVEEEKPEKLELQTINPVLLKKVYELELSVRSQNCLKNENIVYVGDLVARTETQMLKTANFGRKSLNELKKVLANFNLEFGMKDIGWPPDNLESLAKKHEDQY.

The interval 1-239 is alpha N-terminal domain (alpha-NTD); that stretch reads MTTFLAKNWS…DQLQVFINFQ (239 aa). The interval 254–342 is alpha C-terminal domain (alpha-CTD); the sequence is INPVLLKKVY…SLAKKHEDQY (89 aa).

The protein belongs to the RNA polymerase alpha chain family. In terms of assembly, homodimer. The RNAP catalytic core consists of 2 alpha, 1 beta, 1 beta' and 1 omega subunit. When a sigma factor is associated with the core the holoenzyme is formed, which can initiate transcription.

The catalysed reaction is RNA(n) + a ribonucleoside 5'-triphosphate = RNA(n+1) + diphosphate. In terms of biological role, DNA-dependent RNA polymerase catalyzes the transcription of DNA into RNA using the four ribonucleoside triphosphates as substrates. This Orientia tsutsugamushi (strain Boryong) (Rickettsia tsutsugamushi) protein is DNA-directed RNA polymerase subunit alpha.